The following is a 556-amino-acid chain: Formate--tetrahydrofolate ligase (556 aa).

Residue 65–72 (TPAGEGKS) coordinates ATP.

This sequence belongs to the formate--tetrahydrofolate ligase family.

The catalysed reaction is (6S)-5,6,7,8-tetrahydrofolate + formate + ATP = (6R)-10-formyltetrahydrofolate + ADP + phosphate. The protein operates within one-carbon metabolism; tetrahydrofolate interconversion. The polypeptide is Formate--tetrahydrofolate ligase (Streptococcus agalactiae serotype V (strain ATCC BAA-611 / 2603 V/R)).